A 356-amino-acid polypeptide reads, in one-letter code: Holliday junction branch migration complex subunit RuvB (356 aa).

Positions 4–190 are large ATPase domain (RuvB-L); it reads TDKLAAERII…FGIVARLEFY (187 aa). Residues Leu-29, Arg-30, Gly-71, Lys-74, Thr-75, Thr-76, 137 to 139, Arg-180, Tyr-190, and Arg-227 each bind ATP; that span reads EDY. Thr-75 provides a ligand contact to Mg(2+). Residues 191–261 form a small ATPAse domain (RuvB-S) region; sequence DAEQLSRIVR…VADAALAMLD (71 aa). The interval 264-356 is head domain (RuvB-H); it reads PVGFDLMDRK…NLWDTPDAEC (93 aa). DNA contacts are provided by Arg-300, Arg-319, and Arg-324.

Belongs to the RuvB family. As to quaternary structure, homohexamer. Forms an RuvA(8)-RuvB(12)-Holliday junction (HJ) complex. HJ DNA is sandwiched between 2 RuvA tetramers; dsDNA enters through RuvA and exits via RuvB. An RuvB hexamer assembles on each DNA strand where it exits the tetramer. Each RuvB hexamer is contacted by two RuvA subunits (via domain III) on 2 adjacent RuvB subunits; this complex drives branch migration. In the full resolvosome a probable DNA-RuvA(4)-RuvB(12)-RuvC(2) complex forms which resolves the HJ.

Its subcellular location is the cytoplasm. The enzyme catalyses ATP + H2O = ADP + phosphate + H(+). Its function is as follows. The RuvA-RuvB-RuvC complex processes Holliday junction (HJ) DNA during genetic recombination and DNA repair, while the RuvA-RuvB complex plays an important role in the rescue of blocked DNA replication forks via replication fork reversal (RFR). RuvA specifically binds to HJ cruciform DNA, conferring on it an open structure. The RuvB hexamer acts as an ATP-dependent pump, pulling dsDNA into and through the RuvAB complex. RuvB forms 2 homohexamers on either side of HJ DNA bound by 1 or 2 RuvA tetramers; 4 subunits per hexamer contact DNA at a time. Coordinated motions by a converter formed by DNA-disengaged RuvB subunits stimulates ATP hydrolysis and nucleotide exchange. Immobilization of the converter enables RuvB to convert the ATP-contained energy into a lever motion, pulling 2 nucleotides of DNA out of the RuvA tetramer per ATP hydrolyzed, thus driving DNA branch migration. The RuvB motors rotate together with the DNA substrate, which together with the progressing nucleotide cycle form the mechanistic basis for DNA recombination by continuous HJ branch migration. Branch migration allows RuvC to scan DNA until it finds its consensus sequence, where it cleaves and resolves cruciform DNA. This is Holliday junction branch migration complex subunit RuvB from Burkholderia pseudomallei (strain 668).